The chain runs to 243 residues: Protein GIGAS CELL1 (243 aa).

As to quaternary structure, interacts with APC/C activators such as FZR1, FZR2, FZR3, CDC20.1 and CDC20.5. Post-translationally, phosphorylated by CDKA-1 in complex with CYCA1-2. In terms of tissue distribution, expressed in rapidly dividing tissues such as shoot apical meristem and young leaves. Associated with cell division but also with specific cell types.

In terms of biological role, negative regulator of the anaphase-promoting complex/cyclosome (APC/C) ubiquitin ligase required for proper mitotic and meiotic progression and cell fate determination. Involved in entry into both meiosis I and meiosis II. Prevents endomitosis by preferentially inhibiting APC/C(CDC20). Required for megagametophyte and endosperm development. Triggers mitotic cyclins (e.g. CYCB1-1 and CYCB1-2) accumulation. Confers immunity to bacterial pathogens (e.g. Pseudomonas syringae pv. tomato DC3000), which is associated with increased expression of disease resistance (R) genes. GIG1 and PANS1 are part of a network linking centromere cohesion and cell cycle progression through control of APC/C activity. In Arabidopsis thaliana (Mouse-ear cress), this protein is Protein GIGAS CELL1 (GIG1).